The primary structure comprises 246 residues: MSKKISRSIDTIIFVDINSRYTKCQYCDIYIIIDNENGYINITSLCSIISKKIGKEKTFKQWKKNKTSKEQVEEMAKLEKISEKKLFIDICSGPKKMQGKYIHPGLVTLVVHWISPEFAAKVSLWIEEWRRYSSNNSDKYYESLLTANPSYNSQREKEIQEKLLGKYGGEIEVETKTGRIDLMTNDKIIEIKNYYKWKNAIGQLFAYSIYYPDKKKCLYLFNVGTNDLNEIKKVCKKYDVKLKVYD.

Positions 20–129 (RYTKCQYCDI…AKVSLWIEEW (110 aa)) constitute a KilA-N domain.

The protein is Putative KilA-N domain-containing protein L33 of Acanthamoeba polyphaga mimivirus (APMV).